A 310-amino-acid chain; its full sequence is Putative sugar kinase PH1459 (310 aa).

ATP-binding residues include K194, T219, and G224.

It belongs to the carbohydrate kinase PfkB family.

This is Putative sugar kinase PH1459 from Pyrococcus horikoshii (strain ATCC 700860 / DSM 12428 / JCM 9974 / NBRC 100139 / OT-3).